Reading from the N-terminus, the 94-residue chain is Co-chaperonin GroES (94 aa).

It belongs to the GroES chaperonin family. Heptamer of 7 subunits arranged in a ring. Interacts with the chaperonin GroEL.

The protein resides in the cytoplasm. Together with the chaperonin GroEL, plays an essential role in assisting protein folding. The GroEL-GroES system forms a nano-cage that allows encapsulation of the non-native substrate proteins and provides a physical environment optimized to promote and accelerate protein folding. GroES binds to the apical surface of the GroEL ring, thereby capping the opening of the GroEL channel. This Leuconostoc citreum (strain KM20) protein is Co-chaperonin GroES.